The sequence spans 270 residues: ATP synthase subunit a (270 aa).

5 helical membrane passes run 38–58, 98–118, 143–163, 208–228, and 239–259; these read VHID…GIFY, IAPL…MDLV, DVNI…YYSI, LFGN…MLPW, and AIFH…LTIV.

It belongs to the ATPase A chain family. F-type ATPases have 2 components, CF(1) - the catalytic core - and CF(0) - the membrane proton channel. CF(1) has five subunits: alpha(3), beta(3), gamma(1), delta(1), epsilon(1). CF(0) has three main subunits: a(1), b(2) and c(9-12). The alpha and beta chains form an alternating ring which encloses part of the gamma chain. CF(1) is attached to CF(0) by a central stalk formed by the gamma and epsilon chains, while a peripheral stalk is formed by the delta and b chains.

It is found in the cell inner membrane. Key component of the proton channel; it plays a direct role in the translocation of protons across the membrane. This Vibrio parahaemolyticus serotype O3:K6 (strain RIMD 2210633) protein is ATP synthase subunit a.